The following is a 113-amino-acid chain: uncharacterized protein (113 aa).

2 disordered regions span residues 1 to 22 and 90 to 113; these read MGEHAIKRHMRQRKPTKHPLAQ and DGRHTTESSFEHSSPSRSPQSDDL. The segment covering 90-99 has biased composition (basic and acidic residues); it reads DGRHTTESSF. Positions 100–113 are enriched in low complexity; the sequence is EHSSPSRSPQSDDL.

This is an uncharacterized protein from Mycobacterium tuberculosis (strain CDC 1551 / Oshkosh).